A 714-amino-acid polypeptide reads, in one-letter code: Fatty acid oxidation complex subunit alpha (714 aa).

The interval 1–190 (MEMASAFTLN…KLGLVDDVVP (190 aa)) is enoyl-CoA hydratase. The 3-hydroxyacyl-CoA dehydrogenase stretch occupies residues 306–714 (APLNSVGILG…FWKTTATDLQ (409 aa)).

This sequence in the N-terminal section; belongs to the enoyl-CoA hydratase/isomerase family. The protein in the central section; belongs to the 3-hydroxyacyl-CoA dehydrogenase family. Heterotetramer of two alpha chains (FadJ) and two beta chains (FadI).

Its subcellular location is the cytoplasm. It carries out the reaction a (3S)-3-hydroxyacyl-CoA = a (2E)-enoyl-CoA + H2O. It catalyses the reaction a 4-saturated-(3S)-3-hydroxyacyl-CoA = a (3E)-enoyl-CoA + H2O. The catalysed reaction is a (3S)-3-hydroxyacyl-CoA + NAD(+) = a 3-oxoacyl-CoA + NADH + H(+). The enzyme catalyses (3S)-3-hydroxybutanoyl-CoA = (3R)-3-hydroxybutanoyl-CoA. It participates in lipid metabolism; fatty acid beta-oxidation. Its function is as follows. Catalyzes the formation of a hydroxyacyl-CoA by addition of water on enoyl-CoA. Also exhibits 3-hydroxyacyl-CoA epimerase and 3-hydroxyacyl-CoA dehydrogenase activities. This is Fatty acid oxidation complex subunit alpha from Escherichia coli (strain UTI89 / UPEC).